The following is a 297-amino-acid chain: tRNA pseudouridine synthase A (297 aa).

D72 serves as the catalytic Nucleophile. Y144 lines the substrate pocket.

Belongs to the tRNA pseudouridine synthase TruA family. As to quaternary structure, homodimer.

The enzyme catalyses uridine(38/39/40) in tRNA = pseudouridine(38/39/40) in tRNA. In terms of biological role, formation of pseudouridine at positions 38, 39 and 40 in the anticodon stem and loop of transfer RNAs. The polypeptide is tRNA pseudouridine synthase A (Mycobacterium bovis (strain ATCC BAA-935 / AF2122/97)).